The primary structure comprises 142 residues: Large ribosomal subunit protein uL13 (142 aa).

It belongs to the universal ribosomal protein uL13 family. In terms of assembly, part of the 50S ribosomal subunit.

Its function is as follows. This protein is one of the early assembly proteins of the 50S ribosomal subunit, although it is not seen to bind rRNA by itself. It is important during the early stages of 50S assembly. The chain is Large ribosomal subunit protein uL13 from Trichlorobacter lovleyi (strain ATCC BAA-1151 / DSM 17278 / SZ) (Geobacter lovleyi).